We begin with the raw amino-acid sequence, 389 residues long: MEKAIRNFLSQESAGGILLLVAVALAMLMANSPLAGLYQGFLGTEVQVRVGALDLHKPLLLWINDGLMALFFLLIGLEVKRELLEGALSSVAQASLPTFAAIGGMLVPAGIYLLFNYGDPVTQAGWAIPAATDIAFALGIMALLGSRVPVALKVFLLALAIIDDLGVIVIIALFYSTDLSTISLIIASIAIVGLVALNRKGVTALAPYGVLGLVLWVAVLKSGVHATLAGVIIAFCIPLRAKDGSSPSEHLEHSLHPWSTFLILPVFAFANAGVALGNMSLNTLISPVPVGIALGLMLGKPIGVMLFSYAAVKLRLAQLPNGIGWKQIAPVAAMCGIGFTMSMFIASLAFEQADPMYGDLARLGTLIGSIIAALIGYFWLSKVLPKQGV.

11 consecutive transmembrane segments (helical) span residues 17–37, 59–79, 95–115, 124–144, 154–174, 177–197, 213–233, 261–281, 287–307, 328–348, and 363–383; these read ILLL…LAGL, LLLW…GLEV, SLPT…YLLF, AGWA…MALL, VFLL…IALF, TDLS…LVAL, LVLW…GVII, FLIL…NMSL, PVPV…VMLF, IAPV…IASL, and LGTL…LSKV.

It belongs to the NhaA Na(+)/H(+) (TC 2.A.33) antiporter family.

The protein resides in the cell inner membrane. The enzyme catalyses Na(+)(in) + 2 H(+)(out) = Na(+)(out) + 2 H(+)(in). Its function is as follows. Na(+)/H(+) antiporter that extrudes sodium in exchange for external protons. In Shewanella sp. (strain MR-7), this protein is Na(+)/H(+) antiporter NhaA.